A 438-amino-acid chain; its full sequence is Anaerobic glycerol-3-phosphate dehydrogenase subunit B (438 aa).

Belongs to the anaerobic G-3-P dehydrogenase subunit B family. Composed of a catalytic GlpA/B dimer and of membrane bound GlpC. FMN serves as cofactor.

It catalyses the reaction a quinone + sn-glycerol 3-phosphate = dihydroxyacetone phosphate + a quinol. It participates in polyol metabolism; glycerol degradation via glycerol kinase pathway; glycerone phosphate from sn-glycerol 3-phosphate (anaerobic route): step 1/1. In terms of biological role, conversion of glycerol 3-phosphate to dihydroxyacetone. Uses fumarate or nitrate as electron acceptor. The protein is Anaerobic glycerol-3-phosphate dehydrogenase subunit B of Vibrio vulnificus (strain YJ016).